Here is a 225-residue protein sequence, read N- to C-terminus: Uracil-DNA glycosylase (225 aa).

Aspartate 61 acts as the Proton acceptor in catalysis.

This sequence belongs to the uracil-DNA glycosylase (UDG) superfamily. UNG family.

It is found in the cytoplasm. The enzyme catalyses Hydrolyzes single-stranded DNA or mismatched double-stranded DNA and polynucleotides, releasing free uracil.. Its function is as follows. Excises uracil residues from the DNA which can arise as a result of misincorporation of dUMP residues by DNA polymerase or due to deamination of cytosine. This is Uracil-DNA glycosylase from Actinobacillus pleuropneumoniae serotype 5b (strain L20).